The primary structure comprises 454 residues: Bifunctional protein GlmU (454 aa).

The segment at 1 to 228 is pyrophosphorylase; it reads MTLPLHVVIL…PQDVEGANDP (228 aa). Residues 10–13, lysine 24, glutamine 76, 81–82, 103–105, glycine 138, glutamate 153, asparagine 168, and asparagine 226 contribute to the UDP-N-acetyl-alpha-D-glucosamine site; these read LAAG, GT, and YGD. Mg(2+) is bound at residue aspartate 105. A Mg(2+)-binding site is contributed by asparagine 226. Positions 229–249 are linker; that stretch reads WQLAQLERAWQLRAARALSLQ. Residues 250–454 are N-acetyltransferase; that stretch reads GVRMADPARV…IEGWERPTKK (205 aa). UDP-N-acetyl-alpha-D-glucosamine is bound by residues arginine 332 and lysine 350. The Proton acceptor role is filled by histidine 362. UDP-N-acetyl-alpha-D-glucosamine is bound by residues tyrosine 365 and asparagine 376. Residues alanine 379, 385 to 386, serine 404, alanine 422, and arginine 439 contribute to the acetyl-CoA site; that span reads NY.

The protein in the N-terminal section; belongs to the N-acetylglucosamine-1-phosphate uridyltransferase family. It in the C-terminal section; belongs to the transferase hexapeptide repeat family. As to quaternary structure, homotrimer. Mg(2+) is required as a cofactor.

It localises to the cytoplasm. The catalysed reaction is alpha-D-glucosamine 1-phosphate + acetyl-CoA = N-acetyl-alpha-D-glucosamine 1-phosphate + CoA + H(+). It carries out the reaction N-acetyl-alpha-D-glucosamine 1-phosphate + UTP + H(+) = UDP-N-acetyl-alpha-D-glucosamine + diphosphate. It participates in nucleotide-sugar biosynthesis; UDP-N-acetyl-alpha-D-glucosamine biosynthesis; N-acetyl-alpha-D-glucosamine 1-phosphate from alpha-D-glucosamine 6-phosphate (route II): step 2/2. Its pathway is nucleotide-sugar biosynthesis; UDP-N-acetyl-alpha-D-glucosamine biosynthesis; UDP-N-acetyl-alpha-D-glucosamine from N-acetyl-alpha-D-glucosamine 1-phosphate: step 1/1. The protein operates within bacterial outer membrane biogenesis; LPS lipid A biosynthesis. In terms of biological role, catalyzes the last two sequential reactions in the de novo biosynthetic pathway for UDP-N-acetylglucosamine (UDP-GlcNAc). The C-terminal domain catalyzes the transfer of acetyl group from acetyl coenzyme A to glucosamine-1-phosphate (GlcN-1-P) to produce N-acetylglucosamine-1-phosphate (GlcNAc-1-P), which is converted into UDP-GlcNAc by the transfer of uridine 5-monophosphate (from uridine 5-triphosphate), a reaction catalyzed by the N-terminal domain. The polypeptide is Bifunctional protein GlmU (Xanthomonas oryzae pv. oryzae (strain MAFF 311018)).